A 283-amino-acid polypeptide reads, in one-letter code: Pantothenate synthetase (283 aa).

30–37 is an ATP binding site; that stretch reads MGNLHAGH. Catalysis depends on His-37, which acts as the Proton donor. Gln-61 is a (R)-pantoate binding site. Gln-61 provides a ligand contact to beta-alanine. 149–152 is a binding site for ATP; it reads GEKD. Residue Gln-155 participates in (R)-pantoate binding. Residues Leu-178 and 186 to 189 contribute to the ATP site; that span reads MSSR.

This sequence belongs to the pantothenate synthetase family. As to quaternary structure, homodimer.

Its subcellular location is the cytoplasm. The enzyme catalyses (R)-pantoate + beta-alanine + ATP = (R)-pantothenate + AMP + diphosphate + H(+). It functions in the pathway cofactor biosynthesis; (R)-pantothenate biosynthesis; (R)-pantothenate from (R)-pantoate and beta-alanine: step 1/1. In terms of biological role, catalyzes the condensation of pantoate with beta-alanine in an ATP-dependent reaction via a pantoyl-adenylate intermediate. The polypeptide is Pantothenate synthetase (Hahella chejuensis (strain KCTC 2396)).